The sequence spans 146 residues: 3-dehydroquinate dehydratase (146 aa).

The active-site Proton acceptor is the Tyr22. Asn73, His79, and Asp86 together coordinate substrate. Residue His99 is the Proton donor of the active site. Residues 100–101 (LS) and Arg110 contribute to the substrate site.

The protein belongs to the type-II 3-dehydroquinase family. In terms of assembly, homododecamer.

It carries out the reaction 3-dehydroquinate = 3-dehydroshikimate + H2O. The protein operates within metabolic intermediate biosynthesis; chorismate biosynthesis; chorismate from D-erythrose 4-phosphate and phosphoenolpyruvate: step 3/7. Its function is as follows. Catalyzes a trans-dehydration via an enolate intermediate. The sequence is that of 3-dehydroquinate dehydratase from Synechococcus sp. (strain CC9902).